The sequence spans 76 residues: Large ribosomal subunit protein bL31 (76 aa).

Belongs to the bacterial ribosomal protein bL31 family. Type A subfamily. Part of the 50S ribosomal subunit.

In terms of biological role, binds the 23S rRNA. The chain is Large ribosomal subunit protein bL31 from Gluconacetobacter diazotrophicus (strain ATCC 49037 / DSM 5601 / CCUG 37298 / CIP 103539 / LMG 7603 / PAl5).